We begin with the raw amino-acid sequence, 266 residues long: UPF0328 protein ECU03_0130 (266 aa).

The protein belongs to the UPF0328 family.

The chain is UPF0328 protein ECU03_0130 from Encephalitozoon cuniculi (strain GB-M1) (Microsporidian parasite).